Here is a 380-residue protein sequence, read N- to C-terminus: Cytochrome b (380 aa).

4 helical membrane passes run 33–53 (FGSL…FLAM), 77–98 (WMIR…FLHI), 113–133 (WNIG…GYVL), and 178–198 (FFTL…LHLL). Residues His83 and His97 each coordinate heme b. Heme b-binding residues include His182 and His196. His201 serves as a coordination point for a ubiquinone. 4 helical membrane passes run 226–246 (IKDI…TLLS), 288–308 (LGGV…PALH), 320–340 (LSQF…WIGG), and 347–367 (FITI…LLMP).

It belongs to the cytochrome b family. The cytochrome bc1 complex contains 11 subunits: 3 respiratory subunits (MT-CYB, CYC1 and UQCRFS1), 2 core proteins (UQCRC1 and UQCRC2) and 6 low-molecular weight proteins (UQCRH/QCR6, UQCRB/QCR7, UQCRQ/QCR8, UQCR10/QCR9, UQCR11/QCR10 and a cleavage product of UQCRFS1). This cytochrome bc1 complex then forms a dimer. The cofactor is heme b.

It is found in the mitochondrion inner membrane. Functionally, component of the ubiquinol-cytochrome c reductase complex (complex III or cytochrome b-c1 complex) that is part of the mitochondrial respiratory chain. The b-c1 complex mediates electron transfer from ubiquinol to cytochrome c. Contributes to the generation of a proton gradient across the mitochondrial membrane that is then used for ATP synthesis. In Pongo pygmaeus (Bornean orangutan), this protein is Cytochrome b (MT-CYB).